Reading from the N-terminus, the 199-residue chain is Transcriptional regulatory protein DesR (199 aa).

A Response regulatory domain is found at 3-117 (SIFIAEDQQM…ELANAIRSVM (115 aa)). Aspartate 54 carries the 4-aspartylphosphate modification. Positions 131 to 196 (LYSEANPLTD…EAITRSKEKG (66 aa)) constitute an HTH luxR-type domain. Residues 155-174 (TKEIAQELSIKSGTVRNYIS) constitute a DNA-binding region (H-T-H motif).

Phosphorylated by DesK.

The protein localises to the cytoplasm. In terms of biological role, member of the two-component regulatory system DesR/DesK, responsible for cold induction of the des gene coding for the Delta5 acyl-lipid desaturase. This chain is Transcriptional regulatory protein DesR (desR), found in Bacillus subtilis (strain 168).